The primary structure comprises 341 residues: S-adenosylmethionine:tRNA ribosyltransferase-isomerase (341 aa).

Belongs to the QueA family. In terms of assembly, monomer.

The protein localises to the cytoplasm. It carries out the reaction 7-aminomethyl-7-carbaguanosine(34) in tRNA + S-adenosyl-L-methionine = epoxyqueuosine(34) in tRNA + adenine + L-methionine + 2 H(+). Its pathway is tRNA modification; tRNA-queuosine biosynthesis. Functionally, transfers and isomerizes the ribose moiety from AdoMet to the 7-aminomethyl group of 7-deazaguanine (preQ1-tRNA) to give epoxyqueuosine (oQ-tRNA). The sequence is that of S-adenosylmethionine:tRNA ribosyltransferase-isomerase from Chlorobium luteolum (strain DSM 273 / BCRC 81028 / 2530) (Pelodictyon luteolum).